A 479-amino-acid chain; its full sequence is MENLALTTLLLPFIGALVVSFSPQRRAAEWGVLFAALTTLCMLSLISAFYQADKVAVTLTLVNVGDVALFGLVIDRVSTLILFVVVFLGLLVTIYSTGYLTDKNREHPHNGTNRYYAFLLVFIGAMAGLVLSSTLLGQLLFFEITGGCSWALISYYQSDKAQRSALKALLITHIGSLGLYLAAATLFLQTGTFALSAMSELHGDARYLVYGGILFAAWGKSAQLPMQAWLPDAMEAPTPISAYLHAASMVKVGVYIFARAIIDGGNIPHVIGGVGMVMALVTILYGFLMYLPQQDMKRLLAWSTITQLGWMFFGLSLSIFGSRLALEGSIAYIVNHAFAKSLFFLVAGALSYSCGTRLLPRLRGVLHTLPLPGVGFCVAALAITGVPPFNGFFSKFPLFAAGFALSVEYWILLPAMILLMIESVASFAWFIRWFGRVVPGKPSEAVADAAPLPGSMRLVLIVLIVMSLISSVIAATWLQ.

15 consecutive transmembrane segments (helical) span residues 3-23 (NLALTTLLLPFIGALVVSFSP), 30-50 (WGVLFAALTTLCMLSLISAFY), 55-75 (VAVTLTLVNVGDVALFGLVID), 80-100 (LILFVVVFLGLLVTIYSTGYL), 117-137 (AFLLVFIGAMAGLVLSSTLLG), 168-188 (ALLITHIGSLGLYLAAATLFL), 208-228 (LVYGGILFAAWGKSAQLPMQA), 238-258 (TPISAYLHAASMVKVGVYIFA), 270-290 (VIGGVGMVMALVTILYGFLMY), 300-320 (LAWSTITQLGWMFFGLSLSIF), 330-350 (IAYIVNHAFAKSLFFLVAGAL), 369-389 (LPLPGVGFCVAALAITGVPPF), 390-410 (NGFFSKFPLFAAGFALSVEYW), 411-431 (ILLPAMILLMIESVASFAWFI), and 458-478 (LVLIVLIVMSLISSVIAATWL).

This sequence belongs to the complex I subunit 5 family.

The protein localises to the cell inner membrane. Its function is as follows. Possible component of hydrogenase 4. In Escherichia coli (strain K12), this protein is Hydrogenase-4 component D.